We begin with the raw amino-acid sequence, 826 residues long: MLTMGEGNVMTSNNRFASPPQQPSSSSPGTIQNPNFNFIPFNSYSSIIPKEEHGMMSMMMMMGDGTVEEMMENGSAGGSFGSGSEQAEDPKFGNESDVNELHDDEQPPPAKKKRYHRHTNRQIQEMEALFKENPHPDDKQRKRLSAELGLKPRQVKFWFQNRRTQMKAQQDRNENVMLRAENDNLKSENCHLQAELRCLSCPSCGGPTVLGDIPFNEIHIENCRLREELDRLCCIASRYTGRPMQSMPPSQPLINPSPMLPHHQPSLELDMSVYAGNFPEQSCTDMMMLPPQDTACFFPDQTANNNNNNNMLLADEEKVIAMEFAVSCVQELTKMCDTEEPLWIKKKSDKIGGEILCLNEEEYMRLFPWPMENQNNKGDFLREASKANAVVIMNSITLVDAFLNADKWSEMFCSIVARAKTVQIISSGVSGASGSLLLMFAELQVLSPLVPTREAYFLRYVEQNAETGNWAIVDFPIDSFHDQMQPMNTITHEYKRKPSGCIIQDMPNGYSQVKWVEHVEVDEKHVHETFAEYVKSGMAFGANRWLDVLQRQCERIASLMARNITDLGVISSAEARRNIMRLSQRLVKTFCVNISTAYGQSWTALSETTKDTVRITTRKMCEPGQPTGVVLCAVSTTWLPFSHHQVFDLIRDQHHQSLLEVLFNGNSPHEVAHIANGSHPGNCISLLRINVASNSWHNVELMLQESCIDNSGSLIVYSTVDVDSIQQAMNGEDSSNIPILPLGFSIVPVNPPEGISVNSHSPPSCLLTVGIQVLASNVPTAKPNLSTVTTINNHLCATVNQITSALSNTITPVIASSADVSNQEVS.

2 disordered regions span residues 1 to 34 (MLTM…IQNP) and 69 to 119 (EMME…HRHT). Low complexity predominate over residues 23 to 34 (PSSSSPGTIQNP). Residues 88 to 105 (EDPKFGNESDVNELHDDE) are compositionally biased toward basic and acidic residues. Residues 110 to 119 (AKKKRYHRHT) are compositionally biased toward basic residues. Positions 111-170 (KKKRYHRHTNRQIQEMEALFKENPHPDDKQRKRLSAELGLKPRQVKFWFQNRRTQMKAQQ) form a DNA-binding region, homeobox. Positions 165-189 (QMKAQQDRNENVMLRAENDNLKSEN) form a coiled coil. Residues 314–558 (ADEEKVIAME…LQRQCERIAS (245 aa)) enclose the START domain.

This sequence belongs to the HD-ZIP homeobox family. Class IV subfamily. As to expression, expressed in shoot apical meristem (SAM) with higher levels in L1 cells and the epidermal layer of young leaves. Expressed in the L1 of apical inflorescence meristems, early flower primordia, carpel and stamen filament epidermis, ovule primordia, nucellus and chalaze.

The protein localises to the nucleus. Functionally, probable transcription factor. Involved, together with PDF2, in the regulation of flower organs development by promoting the expression of APETALA 3 (AP3) in the epidermis and internal cell layers of developing flowers. This is Homeobox-leucine zipper protein HDG5 from Arabidopsis thaliana (Mouse-ear cress).